We begin with the raw amino-acid sequence, 462 residues long: cAMP-dependent protein kinase regulatory subunit (462 aa).

The segment at 54–203 (TPSPRFPPSP…RLKYAIEGNF (150 aa)) is dimerization and phosphorylation. Positions 79–157 (FGANANPFGG…PTTDSYPAQY (79 aa)) are disordered. Residues 80-102 (GANANPFGGSSSNPNPFGGSASP) are compositionally biased toward low complexity. Phosphoserine is present on serine 164. Residues 204–333 (LFSH…FLEE), glutamate 282, arginine 291, 336–453 (ILSS…KTGV), glutamate 401, and arginine 410 each bind 3',5'-cyclic AMP.

The protein belongs to the cAMP-dependent kinase regulatory chain family. In terms of assembly, tetramer, composed of 2 regulatory (R) and 2 catalytic (C) subunits. In the presence of cAMP it dissociates into 2 active monomeric C subunits and an R dimer.

This Hypocrea atroviridis (Trichoderma atroviride) protein is cAMP-dependent protein kinase regulatory subunit (pkar1).